Reading from the N-terminus, the 211-residue chain is Redox-sensing transcriptional repressor Rex (211 aa).

Residues 18–57 constitute a DNA-binding region (H-T-H motif); that stretch reads LYYRFLENLHASGKQRVSSSELSEAVKVDSATIRRDFSYF. Residue 92–97 coordinates NAD(+); sequence GVGNLG.

It belongs to the transcriptional regulatory Rex family. In terms of assembly, homodimer.

It is found in the cytoplasm. Functionally, modulates transcription in response to changes in cellular NADH/NAD(+) redox state. The polypeptide is Redox-sensing transcriptional repressor Rex (Halalkalibacterium halodurans (strain ATCC BAA-125 / DSM 18197 / FERM 7344 / JCM 9153 / C-125) (Bacillus halodurans)).